Here is a 177-residue protein sequence, read N- to C-terminus: CASP-like protein 5A2 (177 aa).

The Cytoplasmic portion of the chain corresponds to 1–36 (MNASHPAVHPVGVPPAVAGQLPPRMRMKEIQGMPGT). The chain crosses the membrane as a helical span at residues 37–57 (IGGLLLRLGQFCFALVAFSIM). At 58–68 (VSIENFSTVTA) the chain is on the extracellular side. N-linked (GlcNAc...) asparagine glycosylation occurs at Asn62. A helical transmembrane segment spans residues 69-89 (FCYLVAATVLQCLWSLALAII). Residues 90–103 (DGYALLVKRSLRNS) lie on the Cytoplasmic side of the membrane. A helical transmembrane segment spans residues 104-124 (LLVSLLVVGDGVTATLTFAAA). Topologically, residues 125 to 153 (CASAGITVLIGNDLRQCKENHCARYETAT) are extracellular. Residues 154-174 (ALAFLSWFMVSLSFILTFWLL) traverse the membrane as a helical segment. The Cytoplasmic segment spans residues 175 to 177 (ATR).

The protein belongs to the Casparian strip membrane proteins (CASP) family. In terms of assembly, homodimer and heterodimers.

The protein localises to the cell membrane. The protein is CASP-like protein 5A2 of Ginkgo biloba (Ginkgo).